A 710-amino-acid chain; its full sequence is Solute carrier organic anion transporter family member 3A1 (710 aa).

An N-acetylmethionine modification is found at Met-1. Residues 1 to 15 (MQGKKPGGSSGGGRS) show a composition bias toward gly residues. The segment at 1 to 25 (MQGKKPGGSSGGGRSGELQGDEAQR) is disordered. Over 1–40 (MQGKKPGGSSGGGRSGELQGDEAQRNKKKKKKVSCFSNIK) the chain is Cytoplasmic. A helical transmembrane segment spans residues 41–60 (IFLVSECALMLAQGTVGAYL). Over 61–79 (VSVLTTLERRFNLQSADVG) the chain is Extracellular. A helical membrane pass occupies residues 80–100 (VIASSFEIGNLALILFVSYFG). The Cytoplasmic portion of the chain corresponds to 101 to 106 (ARGHRP). Residues 107–131 (RLIGCGGIVMALGALLSALPEFLTH) form a helical membrane-spanning segment. Residues 132–174 (QYKYEAGEIRWGAEGRDVCATNGSSSDEGPDPDLICRNRTATN) lie on the Extracellular side of the membrane. Asn-153 and Asn-169 each carry an N-linked (GlcNAc...) asparagine glycan. The chain crosses the membrane as a helical span at residues 175 to 203 (MMYLLLIGAQVLLGIGATPVQPLGVSYID). The Cytoplasmic segment spans residues 204–222 (DHVRRKDSSLYIGILFTML). The chain crosses the membrane as a helical span at residues 223–243 (VFGPACGFILGSFCTKIYVDA). Over 244 to 261 (VFIDTSNLDITPDDPRWI) the chain is Extracellular. A helical membrane pass occupies residues 262–286 (GAWWGGFLLCGALLFFSSLLMFGFP). Residues 287–344 (QSLPPHSDPGMESEQAMLPEREYERPKPSNGVLRHPLEPDSSASCFQQLRVIPKVTKH) lie on the Cytoplasmic side of the membrane. The helical transmembrane segment at 345–366 (LLSNPVFTCIVLAACMEIAVVA) threads the bilayer. The Extracellular portion of the chain corresponds to 367–386 (GFAAFLGKYLEQQFNLTTSS). Asn-381 carries N-linked (GlcNAc...) asparagine glycosylation. A helical membrane pass occupies residues 387 to 410 (ANQLLGMTAIPCACLGIFLGGLLV). Topologically, residues 411-414 (KKLS) are cytoplasmic. Residues 415 to 438 (LSALGAIRMAMLVNLVSTACYVSF) form a helical membrane-spanning segment. At 439–539 (LFLGCDTGPV…PGCQEAFLTF (101 aa)) the chain is on the extracellular side. Asn-457 carries an N-linked (GlcNAc...) asparagine glycan. The Kazal-like domain maps to 465–513 (LDPYSPCNNNCECQTDSFTPVCGADGITYLSACFAGCNSTNLTGCACLT). Cystine bridges form between Cys-471-Cys-497, Cys-475-Cys-486, and Cys-477-Cys-501. Asn-502, Asn-505, and Asn-519 each carry an N-linked (GlcNAc...) asparagine glycan. The helical transmembrane segment at 540 to 562 (LCVMCVCSLIGAMAQTPSVIILI) threads the bilayer. Residues 563 to 571 (RTVSPELKS) lie on the Cytoplasmic side of the membrane. A helical membrane pass occupies residues 572-597 (YALGVLFLLLRLLGFIPPPLIFGAGI). Topologically, residues 598–630 (DSTCLFWSTFCGEQGACVLYDNVVYRYLYVSIA) are extracellular. The chain crosses the membrane as a helical span at residues 631–648 (IALKSFAFILYTTTWQCL). Residues 649–705 (RKNYKRYIKNHEGGLSTSEFFASTLTLDNLGRDPVPAHQTHRTKFIYNLEDHEWCEN) are Cytoplasmic-facing.

It belongs to the organo anion transporter (TC 2.A.60) family. In terms of tissue distribution, widely expressed.

It is found in the basolateral cell membrane. It localises to the apical cell membrane. The protein localises to the basal cell membrane. It carries out the reaction L-thyroxine(out) = L-thyroxine(in). It catalyses the reaction prostaglandin E1(out) = prostaglandin E1(in). The catalysed reaction is prostaglandin E2(out) = prostaglandin E2(in). The enzyme catalyses prostaglandin F2alpha(out) = prostaglandin F2alpha(in). It carries out the reaction (5Z,8Z,11Z,14Z)-eicosatetraenoate(out) = (5Z,8Z,11Z,14Z)-eicosatetraenoate(in). It catalyses the reaction taurocholate(out) = taurocholate(in). The catalysed reaction is glycocholate(out) = glycocholate(in). The enzyme catalyses estrone 3-sulfate(out) = estrone 3-sulfate(in). It carries out the reaction argipressin(out) = argipressin(in). Its function is as follows. Putative organic anion antiporter with apparent broad substrate specificity. Recognizes various substrates including thyroid hormone L-thyroxine, prostanoids such as prostaglandin E1 and E2, bile acids such as taurocholate, glycolate and glycochenodeoxycholate and peptide hormones such as L-arginine vasopressin, likely operating in a tissue-specific manner. The transport mechanism, its electrogenicity and potential tissue-specific counterions remain to be elucidated. This is Solute carrier organic anion transporter family member 3A1 (Slco3a1) from Mus musculus (Mouse).